Reading from the N-terminus, the 200-residue chain is Holliday junction resolvase RecU (200 aa).

Residues 1 to 25 (MTIRYPNGKRYNQASQPQKTPIKTH) form a disordered region. Polar residues predominate over residues 10-25 (RYNQASQPQKTPIKTH). 4 residues coordinate Mg(2+): T85, D87, E100, and Q119.

Belongs to the RecU family. It depends on Mg(2+) as a cofactor.

The protein localises to the cytoplasm. It catalyses the reaction Endonucleolytic cleavage at a junction such as a reciprocal single-stranded crossover between two homologous DNA duplexes (Holliday junction).. Functionally, endonuclease that resolves Holliday junction intermediates in genetic recombination. Cleaves mobile four-strand junctions by introducing symmetrical nicks in paired strands. Promotes annealing of linear ssDNA with homologous dsDNA. Required for DNA repair, homologous recombination and chromosome segregation. This chain is Holliday junction resolvase RecU, found in Bacillus cereus (strain G9842).